A 756-amino-acid polypeptide reads, in one-letter code: Transient receptor potential cation channel subfamily V member 2 (756 aa).

Residues 1–45 (MTSASNPPAFRLETSDGDEEGSAEVNKGKNEPPPMESPFQGEDRN) form a disordered region. The required for interaction with SLC50A1 stretch occupies residues 1-385 (MTSASNPPAF…LLQEKWDRLI (385 aa)). At 1–387 (MTSASNPPAF…QEKWDRLIPR (387 aa)) the chain is on the cytoplasmic side. A phosphoserine mark is found at S15 and S77. ANK repeat units follow at residues 68–110 (NRFD…TEGS), 111–157 (TGKT…DEFY), 158–203 (RGHS…TCFY), 204–239 (FGEL…ATDS), 240–288 (LGNT…ICNH), and 289–315 (QGLT…REFS). A helical membrane pass occupies residues 388-408 (FFFNFACYLVYMIIFTIVAYH). The Extracellular segment spans residues 409 to 428 (QPSLEQPAIPSSKATFGDSM). The helical transmembrane segment at 429 to 449 (LLLGHILILLGGIYLLLGQLW) threads the bilayer. Residues 450–455 (YFWRRR) lie on the Cytoplasmic side of the membrane. Residues 456–476 (LFIWISFMDSYFEILFLVQAL) traverse the membrane as a helical segment. Residues 477-490 (LTVLSQVLRFVETE) lie on the Extracellular side of the membrane. Residues 491-511 (WYLPLLVSSLVLGWLNLLYYT) traverse the membrane as a helical segment. The Cytoplasmic portion of the chain corresponds to 512–532 (RGFQHTGIYSVMIQKVILRDL). The chain crosses the membrane as a helical span at residues 533–553 (LRFLLVYLVFLFGFAVALVSL). Residues 559 to 583 (SPKAPEDSNTTVTEKPTLGQEEEPV) are disordered. N567 carries an N-linked (GlcNAc...) asparagine glycan. The pore-forming intramembrane region spans 568–604 (TTVTEKPTLGQEEEPVPYGGILDASLELFKFTIGMGE). A helical membrane pass occupies residues 617–637 (VLLLLLAYVLLTYVLLLNMLI). Topologically, residues 638-756 (ALMSETVNSV…HLPLQVLQSH (119 aa)) are cytoplasmic. The disordered stretch occupies residues 719–756 (EDPSGAGITGYKKNPTSKPGKNSASEEDHLPLQVLQSH). Residues 732 to 741 (NPTSKPGKNS) are compositionally biased toward polar residues. 2 positions are modified to phosphoserine: S743 and S755.

It belongs to the transient receptor (TC 1.A.4) family. TrpV subfamily. TRPV2 sub-subfamily. As to quaternary structure, homotetramer. Interacts with a cAMP-dependent protein kinase type II regulatory subunit (PRKAR2A or PRKAR2B) and ACBD3. Interacts with SLC50A1; the interaction probably occurs intracellularly and depends on TRPV2 N-glycosylation. Post-translationally, N-glycosylated. In terms of processing, phosphorylated by PKA. Abundantly expressed in spleen, placenta, skeleton muscle, lung and brain.

Its subcellular location is the cell membrane. It is found in the cytoplasm. The protein localises to the melanosome. It catalyses the reaction Ca(2+)(in) = Ca(2+)(out). The catalysed reaction is Mg(2+)(in) = Mg(2+)(out). The enzyme catalyses Na(+)(in) = Na(+)(out). It carries out the reaction K(+)(in) = K(+)(out). In terms of biological role, calcium-permeable, non-selective cation channel with an outward rectification. Seems to be regulated, at least in part, by IGF1, PDGF and neuropeptide head activator. May transduce physical stimuli in mast cells. Activated by temperatures higher than 52 degrees Celsius; is not activated by vanilloids and acidic pH. In Mus musculus (Mouse), this protein is Transient receptor potential cation channel subfamily V member 2 (Trpv2).